A 117-amino-acid polypeptide reads, in one-letter code: UPF0375 protein Y45F10C.2 (117 aa).

An N-terminal signal peptide occupies residues 1–20 (MNSFVSTVLLLSVTIALVSG).

The protein belongs to the UPF0375 family. As to expression, expressed in the uterine epithelium.

Its subcellular location is the secreted. Negatively regulates the egg-laying rate by promoting retention of fertilized eggs. This is UPF0375 protein Y45F10C.2 from Caenorhabditis elegans.